The primary structure comprises 364 residues: MRLYLNVFYSQKNAPNSVVSNIISSSFNDRLLQALQCRNNSRPPVWLMRQAGRHLASYRALREKYSFLDMCHNPELIAEVTLLPIEAYQVDAAILFSDILVIPEALKVGVRFEDKVGPIIEKPITNLHDIEKLAMPEDLTSLEFVKEGIRCLQPRLNVPLIGFCGAPFTVASYMIEGKTSRDFKKIKHWMYHEPQGFHTLLRKIADWSIAYLNMQIDAGVHALQIFDSWANTLSYRQFQEFSLNYLKYILKGLKKDIPLILFCRGSSVFGPDLASIKPAAVGLDWNCRVKRMRDVIPYPIALQGNLDPDLLYAPLPKIREEVNALLDEMEGDRGFILNLGHGIFPDVSEEAVRTLVETVRERRG.

Residues Arg-49 to Arg-53, Asp-98, Tyr-173, Ser-228, and His-341 contribute to the substrate site.

It belongs to the uroporphyrinogen decarboxylase family. As to quaternary structure, homodimer.

It localises to the cytoplasm. It catalyses the reaction uroporphyrinogen III + 4 H(+) = coproporphyrinogen III + 4 CO2. Its pathway is porphyrin-containing compound metabolism; protoporphyrin-IX biosynthesis; coproporphyrinogen-III from 5-aminolevulinate: step 4/4. In terms of biological role, catalyzes the decarboxylation of four acetate groups of uroporphyrinogen-III to yield coproporphyrinogen-III. In Protochlamydia amoebophila (strain UWE25), this protein is Uroporphyrinogen decarboxylase.